Consider the following 565-residue polypeptide: CTP synthase (565 aa).

Residues 1–272 (MARPKNVKHI…DLRVLKKLGL (272 aa)) are amidoligase domain. Serine 18 provides a ligand contact to CTP. Serine 18 provides a ligand contact to UTP. An ATP-binding site is contributed by 19-24 (SLGKGI). Tyrosine 59 contacts L-glutamine. Residue aspartate 76 participates in ATP binding. Mg(2+)-binding residues include aspartate 76 and glutamate 146. Residues 153 to 155 (DIE), 193 to 198 (KTKPTQ), and lysine 229 each bind CTP. UTP contacts are provided by residues 193-198 (KTKPTQ) and lysine 229. Positions 299–543 (TIGICGKYTE…VAAAKEYAHG (245 aa)) constitute a Glutamine amidotransferase type-1 domain. Glycine 363 contacts L-glutamine. The active-site Nucleophile; for glutamine hydrolysis is cysteine 390. L-glutamine-binding positions include 391-394 (LGMQ), glutamate 414, and arginine 471. Catalysis depends on residues histidine 516 and glutamate 518.

Belongs to the CTP synthase family. In terms of assembly, homotetramer.

It catalyses the reaction UTP + L-glutamine + ATP + H2O = CTP + L-glutamate + ADP + phosphate + 2 H(+). It carries out the reaction L-glutamine + H2O = L-glutamate + NH4(+). The enzyme catalyses UTP + NH4(+) + ATP = CTP + ADP + phosphate + 2 H(+). The protein operates within pyrimidine metabolism; CTP biosynthesis via de novo pathway; CTP from UDP: step 2/2. Allosterically activated by GTP, when glutamine is the substrate; GTP has no effect on the reaction when ammonia is the substrate. The allosteric effector GTP functions by stabilizing the protein conformation that binds the tetrahedral intermediate(s) formed during glutamine hydrolysis. Inhibited by the product CTP, via allosteric rather than competitive inhibition. Catalyzes the ATP-dependent amination of UTP to CTP with either L-glutamine or ammonia as the source of nitrogen. Regulates intracellular CTP levels through interactions with the four ribonucleotide triphosphates. The polypeptide is CTP synthase (Pelodictyon phaeoclathratiforme (strain DSM 5477 / BU-1)).